The following is a 346-amino-acid chain: MTSVDTMPPPMVRLESQPDDLMGSSDVADVSDLLPGHTNGLEDEVKIPATNGLKSHPVVTTGTEKTGVMPPLQPESKKNNKGVPWYHASPNDIDPVTRGLLENYSKIPSDQVQQHVIAIREKAWDVYPYPCIGQFLFLNLTINLSPYYPSLVSRLRDQNQTLLDLGCCFAQDVRKLVSDGAPSQNIYGADLYGEFMDLGFELFRDRKTLKSTFFPTDILNERDLLLKGLDGEMDVVYLGLFLHHFDFETCVKVCTRVTRLLKPKPGSLVMGVQVGSLVGDTKPIPIPSGGILWRHDIASLERVWEEVGALTGTKWKVEARLERGKGFGEKWQLEGTRRLGFEVYRL.

2 disordered regions span residues 1–22 (MTSV…DDLM) and 52–88 (GLKS…WYHA). S-adenosyl-L-methionine contacts are provided by residues 190–191 (DL) and 217–218 (DI).

This sequence belongs to the class I-like SAM-binding methyltransferase superfamily. Homodimer.

The catalysed reaction is 4-O-demethylbarbatate + S-adenosyl-L-methionine = proatranorin I + S-adenosyl-L-homocysteine. Its pathway is secondary metabolite biosynthesis; terpenoid biosynthesis. In terms of biological role, O-methyltransferase; part of the gene cluster that mediates the biosynthesis of atranorin, a depside of polyketide origin that accumulates in the cortical or medullary layers of lichen thalli. Atr3 methylates the carboxyl group of 4-O-demethylbarbatic acid to yield proatranorin I. Atr3 is also able to methylate the atr2 product proatranorin III to produce the final compound atranorin. The first step in the pathway is performed by the non-reducing polyketide synthase atr1 that produces 4-O-demethylbarbatic acid composed of two 3-methylorsellinic acid (3MOA) moieties. The pathway continues with the actions of the cytochrome P450 monooygenase atr2 that catalizes the oxidation of c-9 and the O-methyltransferase atr3 that performs the methylation of the carboxyl group to yield atranorin, via the proatranorin II and III intermediates if atr2 acts first, or the proatranorin I intermediate if atr3 acts first. This is O-methyltransferase atr3 from Stereocaulon alpinum (Alpine snow lichen).